We begin with the raw amino-acid sequence, 616 residues long: FNIP repeat-containing protein DDB_G0290639 (616 aa).

Residues 239–274 (FENNNNNNNNNNNNNNNNNNNNNNNNNNNNNKKTEK) are a coiled coil. Positions 241–269 (NNNNNNNNNNNNNNNNNNNNNNNNNNNNN) are enriched in low complexity. Residues 241 to 270 (NNNNNNNNNNNNNNNNNNNNNNNNNNNNNK) form a disordered region. 6 FNIP repeats span residues 337 to 379 (FEES…FNDG), 380 to 421 (FNQS…KLCN), 423 to 464 (FSQP…VFYD), 466 to 508 (FNQL…FSDG), 509 to 550 (FNQT…LIDS), and 552 to 593 (FQQP…ILDK).

The chain is FNIP repeat-containing protein DDB_G0290639 from Dictyostelium discoideum (Social amoeba).